Consider the following 752-residue polypeptide: Multifunctional tryptophan biosynthesis protein (752 aa).

The 200-residue stretch at Phe3–Gly202 folds into the Glutamine amidotransferase type-1 domain. Gly58–Gly60 contacts L-glutamine. Cys86 (nucleophile; for GATase activity) is an active-site residue. Residue Ser136–Leu137 coordinates L-glutamine. Catalysis depends on for GATase activity residues His176 and Glu178. The indole-3-glycerol phosphate synthase stretch occupies residues Ile231 to Ile495. The N-(5'-phosphoribosyl)anthranilate isomerase stretch occupies residues Leu509–Gly752.

The enzyme catalyses N-(5-phospho-beta-D-ribosyl)anthranilate = 1-(2-carboxyphenylamino)-1-deoxy-D-ribulose 5-phosphate. The catalysed reaction is 1-(2-carboxyphenylamino)-1-deoxy-D-ribulose 5-phosphate + H(+) = (1S,2R)-1-C-(indol-3-yl)glycerol 3-phosphate + CO2 + H2O. It catalyses the reaction chorismate + L-glutamine = anthranilate + pyruvate + L-glutamate + H(+). It participates in amino-acid biosynthesis; L-tryptophan biosynthesis; L-tryptophan from chorismate: step 1/5. Its pathway is amino-acid biosynthesis; L-tryptophan biosynthesis; L-tryptophan from chorismate: step 3/5. It functions in the pathway amino-acid biosynthesis; L-tryptophan biosynthesis; L-tryptophan from chorismate: step 4/5. Functionally, trifunctional enzyme bearing the Gln amidotransferase (GATase) domain of anthranilate synthase, indole-glycerolphosphate synthase, and phosphoribosylanthranilate isomerase activities. The chain is Multifunctional tryptophan biosynthesis protein (TRP1) from Cryptococcus neoformans var. neoformans serotype D (strain JEC21 / ATCC MYA-565) (Filobasidiella neoformans).